Here is a 637-residue protein sequence, read N- to C-terminus: 1-deoxy-D-xylulose-5-phosphate synthase (637 aa).

Residues His-73 and 113–115 (SHA) each bind thiamine diphosphate. Asp-144 lines the Mg(2+) pocket. Thiamine diphosphate-binding positions include 145-146 (GA), Asn-174, Tyr-285, and Glu-366. Asn-174 is a Mg(2+) binding site.

Belongs to the transketolase family. DXPS subfamily. As to quaternary structure, homodimer. Mg(2+) is required as a cofactor. The cofactor is thiamine diphosphate.

It catalyses the reaction D-glyceraldehyde 3-phosphate + pyruvate + H(+) = 1-deoxy-D-xylulose 5-phosphate + CO2. It functions in the pathway metabolic intermediate biosynthesis; 1-deoxy-D-xylulose 5-phosphate biosynthesis; 1-deoxy-D-xylulose 5-phosphate from D-glyceraldehyde 3-phosphate and pyruvate: step 1/1. In terms of biological role, catalyzes the acyloin condensation reaction between C atoms 2 and 3 of pyruvate and glyceraldehyde 3-phosphate to yield 1-deoxy-D-xylulose-5-phosphate (DXP). This Streptomyces griseus subsp. griseus (strain JCM 4626 / CBS 651.72 / NBRC 13350 / KCC S-0626 / ISP 5235) protein is 1-deoxy-D-xylulose-5-phosphate synthase.